The sequence spans 358 residues: F-box only protein 25 (358 aa).

The segment at 1–83 (MPFLGQDWRS…NDTNTQSFYR (83 aa)) is interaction with beta-actin. Positions 226-274 (LTLSDLPLHMLNNILYRFSDGWDIITLGQVTPTLYMLSEDRQLWKKLCQ) constitute an F-box domain.

In terms of assembly, part of a SCF (SKP1-cullin-F-box) protein ligase complex consisting of FBXO25, SKP1, CUL1 and RBX1. Interacts directly with SKP1 and CUL1. Interacts (via C-terminus) with beta-actin (via N-terminus).

It is found in the nucleus. It functions in the pathway protein modification; protein ubiquitination. Its function is as follows. Substrate-recognition component of the SCF (SKP1-CUL1-F-box protein)-type E3 ubiquitin ligase complex. May play a role in accumulation of expanded polyglutamine (polyQ) protein huntingtin (HTT). In Macaca fascicularis (Crab-eating macaque), this protein is F-box only protein 25 (FBXO25).